Consider the following 418-residue polypeptide: Serine proteinase inhibitor 2.4 (418 aa).

Residues M1–R28 form the signal peptide. N23, N38, N104, and N269 each carry an N-linked (GlcNAc...) asparagine glycan.

It belongs to the serpin family.

It is found in the secreted. In Apodemus sylvaticus (European woodmouse), this protein is Serine proteinase inhibitor 2.4.